The chain runs to 544 residues: Shootin-1 (544 aa).

Coiled-coil stretches lie at residues 17–100, 141–184, and 259–349; these read SNQV…LKRK, IVIT…EKHD, and EALQ…QVSN. The disordered stretch occupies residues 343 to 544; the sequence is KLQQVSNPPT…TTTICTEQLS (202 aa). The span at 352–371 shows a compositional bias: pro residues; sequence TAAPAPPPPPPPPPPPPPPS. Low complexity predominate over residues 372-383; sequence SSSSNPLSSLLS. Residues 397–412 show a composition bias toward basic and acidic residues; the sequence is LVEKDSSEKSPEKDVR. Residues 469–479 show a composition bias toward pro residues; it reads SSSPGPRPPSP. A coiled-coil region spans residues 480–504; that stretch reads SEKSELEKALQRRREAVKSAKNNTN. Residues 481 to 497 show a composition bias toward basic and acidic residues; sequence EKSELEKALQRRREAVK. A compositionally biased stretch (polar residues) spans 499–544; the sequence is AKNNTNPSSVVDLTQIKQTRSEPGQNTGDQETLRHTTTTICTEQLS.

This sequence belongs to the shootin family.

The protein resides in the perikaryon. Its subcellular location is the cell projection. It is found in the axon. It localises to the growth cone. The protein localises to the cytoplasm. The protein resides in the cytoskeleton. Its subcellular location is the filopodium. It is found in the lamellipodium. In terms of biological role, involved in the generation of internal asymmetric signals required for neuronal polarization and neurite outgrowth. This Danio rerio (Zebrafish) protein is Shootin-1.